Here is a 207-residue protein sequence, read N- to C-terminus: Thiamine-phosphate synthase (207 aa).

Residues 38–42 (QYRNK) and Asn70 each bind 4-amino-2-methyl-5-(diphosphooxymethyl)pyrimidine. Asp71 and Asp90 together coordinate Mg(2+). Ser109 provides a ligand contact to 4-amino-2-methyl-5-(diphosphooxymethyl)pyrimidine. 136 to 138 (TAT) contributes to the 2-[(2R,5Z)-2-carboxy-4-methylthiazol-5(2H)-ylidene]ethyl phosphate binding site. Lys139 is a binding site for 4-amino-2-methyl-5-(diphosphooxymethyl)pyrimidine. Residues Gly165 and 185–186 (VS) contribute to the 2-[(2R,5Z)-2-carboxy-4-methylthiazol-5(2H)-ylidene]ethyl phosphate site.

The protein belongs to the thiamine-phosphate synthase family. The cofactor is Mg(2+).

It carries out the reaction 2-[(2R,5Z)-2-carboxy-4-methylthiazol-5(2H)-ylidene]ethyl phosphate + 4-amino-2-methyl-5-(diphosphooxymethyl)pyrimidine + 2 H(+) = thiamine phosphate + CO2 + diphosphate. It catalyses the reaction 2-(2-carboxy-4-methylthiazol-5-yl)ethyl phosphate + 4-amino-2-methyl-5-(diphosphooxymethyl)pyrimidine + 2 H(+) = thiamine phosphate + CO2 + diphosphate. The catalysed reaction is 4-methyl-5-(2-phosphooxyethyl)-thiazole + 4-amino-2-methyl-5-(diphosphooxymethyl)pyrimidine + H(+) = thiamine phosphate + diphosphate. Its pathway is cofactor biosynthesis; thiamine diphosphate biosynthesis; thiamine phosphate from 4-amino-2-methyl-5-diphosphomethylpyrimidine and 4-methyl-5-(2-phosphoethyl)-thiazole: step 1/1. Functionally, condenses 4-methyl-5-(beta-hydroxyethyl)thiazole monophosphate (THZ-P) and 2-methyl-4-amino-5-hydroxymethyl pyrimidine pyrophosphate (HMP-PP) to form thiamine monophosphate (TMP). This Xanthomonas campestris pv. campestris (strain 8004) protein is Thiamine-phosphate synthase.